Here is a 153-residue protein sequence, read N- to C-terminus: Ribonuclease H (153 aa).

Residues Met-1–Glu-141 enclose the RNase H type-1 domain. Residues Asp-9, Glu-47, Asp-69, and Asp-133 each contribute to the Mg(2+) site.

The protein belongs to the RNase H family. As to quaternary structure, monomer. Mg(2+) is required as a cofactor.

It is found in the cytoplasm. It catalyses the reaction Endonucleolytic cleavage to 5'-phosphomonoester.. Functionally, endonuclease that specifically degrades the RNA of RNA-DNA hybrids. This chain is Ribonuclease H, found in Psychromonas ingrahamii (strain DSM 17664 / CCUG 51855 / 37).